Reading from the N-terminus, the 746-residue chain is tRNA(Met) cytidine acetyltransferase TmcA (746 aa).

Residues 181–200 (ARAETGGNPPSPGDSACRTE) are disordered. ATP-binding positions include Gln-202, 228–237 (GRGKSAALGI), and Arg-370. An N-acetyltransferase domain is found at 405–617 (VAVERLDRDA…VHLPHQLADP (213 aa)). Residues 517 to 519 (IAV), 524 to 530 (QGQGLGT), Glu-557, and Arg-564 contribute to the acetyl-CoA site.

It belongs to the RNA cytidine acetyltransferase family. TmcA subfamily.

The protein resides in the cytoplasm. The catalysed reaction is cytidine(34) in elongator tRNA(Met) + acetyl-CoA + ATP + H2O = N(4)-acetylcytidine(34) in elongator tRNA(Met) + ADP + phosphate + CoA + H(+). Catalyzes the formation of N(4)-acetylcytidine (ac(4)C) at the wobble position of tRNA(Met), by using acetyl-CoA as an acetyl donor and ATP (or GTP). The protein is tRNA(Met) cytidine acetyltransferase TmcA of Nitrosococcus halophilus (strain Nc4).